The following is a 539-amino-acid chain: GMP synthase [glutamine-hydrolyzing] (539 aa).

The 199-residue stretch at 4–202 (KILILDFGSQ…VLGICRAKAD (199 aa)) folds into the Glutamine amidotransferase type-1 domain. Cysteine 81 functions as the Nucleophile in the catalytic mechanism. Residues histidine 176 and glutamate 178 contribute to the active site. Residues 203-395 (WVMKDHIEEA…LGLPPEMVYR (193 aa)) enclose the GMPS ATP-PPase domain. 230–236 (SGGVDSS) serves as a coordination point for ATP.

Homodimer.

It carries out the reaction XMP + L-glutamine + ATP + H2O = GMP + L-glutamate + AMP + diphosphate + 2 H(+). Its pathway is purine metabolism; GMP biosynthesis; GMP from XMP (L-Gln route): step 1/1. Its function is as follows. Catalyzes the synthesis of GMP from XMP. This is GMP synthase [glutamine-hydrolyzing] from Cupriavidus pinatubonensis (strain JMP 134 / LMG 1197) (Cupriavidus necator (strain JMP 134)).